Reading from the N-terminus, the 235-residue chain is Ribosomal RNA small subunit methyltransferase G (235 aa).

S-adenosyl-L-methionine-binding positions include glycine 74, leucine 79, 124–125 (AE), and arginine 142. The interval 211 to 235 (RRRAAKPGRNKSGRTARSRGRTGRR) is disordered. The span at 213–235 (RAAKPGRNKSGRTARSRGRTGRR) shows a compositional bias: basic residues.

The protein belongs to the methyltransferase superfamily. RNA methyltransferase RsmG family.

It localises to the cytoplasm. Its function is as follows. Specifically methylates the N7 position of guanine in position 518 of 16S rRNA. This is Ribosomal RNA small subunit methyltransferase G from Mycolicibacterium smegmatis (strain ATCC 700084 / mc(2)155) (Mycobacterium smegmatis).